The chain runs to 572 residues: Proline--tRNA ligase (572 aa).

It belongs to the class-II aminoacyl-tRNA synthetase family. ProS type 1 subfamily. Homodimer.

The protein resides in the cytoplasm. The enzyme catalyses tRNA(Pro) + L-proline + ATP = L-prolyl-tRNA(Pro) + AMP + diphosphate. Its function is as follows. Catalyzes the attachment of proline to tRNA(Pro) in a two-step reaction: proline is first activated by ATP to form Pro-AMP and then transferred to the acceptor end of tRNA(Pro). As ProRS can inadvertently accommodate and process non-cognate amino acids such as alanine and cysteine, to avoid such errors it has two additional distinct editing activities against alanine. One activity is designated as 'pretransfer' editing and involves the tRNA(Pro)-independent hydrolysis of activated Ala-AMP. The other activity is designated 'posttransfer' editing and involves deacylation of mischarged Ala-tRNA(Pro). The misacylated Cys-tRNA(Pro) is not edited by ProRS. The sequence is that of Proline--tRNA ligase from Pectobacterium atrosepticum (strain SCRI 1043 / ATCC BAA-672) (Erwinia carotovora subsp. atroseptica).